A 176-amino-acid chain; its full sequence is Disulfide bond formation protein B (176 aa).

Over 1–13 (MQFLNTFSKSRIS) the chain is Cytoplasmic. The helical transmembrane segment at 14–30 (WLLLLLCIVFFEGSALF) threads the bilayer. Residues 31–48 (FQHGMKLGPCVMCIYERV) lie on the Periplasmic side of the membrane. A disulfide bond links Cys40 and Cys43. A helical transmembrane segment spans residues 49-64 (AMMGIAFAALLGAIAP). Over 65 to 71 (QYAIIRW) the chain is Cytoplasmic. The chain crosses the membrane as a helical span at residues 72-89 (AGLIAWGYSAVRGLQLSI). The Periplasmic segment spans residues 90-144 (EHVGYQFNPSPFATCDLFVQFPNWAPLNKWVPWMFEAYGNCAEVVWTFLGQSMPQ). Cys104 and Cys130 are disulfide-bonded. Residues 145–163 (WLVIIFAGNLVALALIVIA) form a helical membrane-spanning segment. The Cytoplasmic segment spans residues 164-176 (QFFSKKTNTILDM).

It belongs to the DsbB family.

The protein resides in the cell inner membrane. In terms of biological role, required for disulfide bond formation in some periplasmic proteins. Acts by oxidizing the DsbA protein. In Photobacterium profundum (strain SS9), this protein is Disulfide bond formation protein B.